The following is a 447-amino-acid chain: Protein king tubby (447 aa).

The disordered stretch occupies residues 54 to 84; that stretch reads GSPQNPDQILSNNSSSITMNSSRNNSNNMRS. The span at 62–84 shows a compositional bias: low complexity; that stretch reads ILSNNSSSITMNSSRNNSNNMRS. At Ser136 the chain carries Phosphoserine. Over residues 168 to 182 the composition is skewed to low complexity; the sequence is EGAAMEGSNGAANGS. The interval 168–191 is disordered; the sequence is EGAAMEGSNGAANGSGSVGGSGES.

This sequence belongs to the TUB family.

The protein resides in the cytoplasm. The protein localises to the nucleus. It is found in the cell projection. It localises to the cilium membrane. Its subcellular location is the rhabdomere. In Drosophila grimshawi (Hawaiian fruit fly), this protein is Protein king tubby.